A 321-amino-acid chain; its full sequence is Geranylgeranyl transferase type-2 subunit beta 1 (321 aa).

Ser2 carries the N-acetylserine modification. 6 PFTB repeats span residues 14–55 (ADKH…DLLD), 62–103 (EEEV…ALFD), 110–151 (IGKV…SILK), 158–199 (VEKA…AITG), 206–247 (KDSL…IMID), and 254–296 (KAKL…SLLE). Residues 184-186 (HAG) and 226-229 (RPEK) contribute to the geranylgeranyl diphosphate site. Zn(2+)-binding residues include Asp232 and Cys234. Geranylgeranyl diphosphate is bound at residue 235–238 (YSWW). His284 contacts Zn(2+).

It belongs to the protein prenyltransferase subunit beta family. Heterotrimer composed of the alpha subunit RGTA, the beta subunit RGTB and REP; within this trimer, RGTA and RGTB form the catalytic component, while REP mediates peptide substrate binding. Zn(2+) is required as a cofactor. It depends on Mg(2+) as a cofactor.

It catalyses the reaction geranylgeranyl diphosphate + L-cysteinyl-[protein] = S-geranylgeranyl-L-cysteinyl-[protein] + diphosphate. With respect to regulation, the enzymatic reaction requires the aid of the Rab escort protein REP. Catalyzes the transfer of a geranylgeranyl moiety from geranylgeranyl diphosphate to both cysteines of Rab proteins with the C-terminal sequence -CCXX, CXXX, -XCCX and -XCXC, such as RABA1A, RABA2A, RABF2A and RABG2. Involved in the geranylgeranylation of RABA2A. In vitro, can prenylate PGGTI targets with the C-terminal sequence Cys-aliphatic-aliphatic-X (CaaX) with leucine in the terminal position. Substrates with the C-terminal sequence -CSIL such as ARAC11/ROP1 or GG2/AGG2 are prenylated independently of REP and when the beta subunit is associated with the alpha subunit RGTA1. In terms of biological role, required for male fertility and root tip growth. The sequence is that of Geranylgeranyl transferase type-2 subunit beta 1 from Arabidopsis thaliana (Mouse-ear cress).